The chain runs to 402 residues: CCA-adding enzyme (402 aa).

2 residues coordinate ATP: glycine 32 and arginine 35. Residues glycine 32 and arginine 35 each contribute to the CTP site. Aspartate 45 and aspartate 47 together coordinate Mg(2+). Residues arginine 116, aspartate 159, arginine 162, arginine 165, and arginine 168 each contribute to the ATP site. Positions 116, 159, 162, 165, and 168 each coordinate CTP.

It belongs to the tRNA nucleotidyltransferase/poly(A) polymerase family. Bacterial CCA-adding enzyme type 3 subfamily. In terms of assembly, homodimer. Mg(2+) is required as a cofactor.

It carries out the reaction a tRNA precursor + 2 CTP + ATP = a tRNA with a 3' CCA end + 3 diphosphate. The catalysed reaction is a tRNA with a 3' CCA end + 2 CTP + ATP = a tRNA with a 3' CCACCA end + 3 diphosphate. In terms of biological role, catalyzes the addition and repair of the essential 3'-terminal CCA sequence in tRNAs without using a nucleic acid template. Adds these three nucleotides in the order of C, C, and A to the tRNA nucleotide-73, using CTP and ATP as substrates and producing inorganic pyrophosphate. tRNA 3'-terminal CCA addition is required both for tRNA processing and repair. Also involved in tRNA surveillance by mediating tandem CCA addition to generate a CCACCA at the 3' terminus of unstable tRNAs. While stable tRNAs receive only 3'-terminal CCA, unstable tRNAs are marked with CCACCA and rapidly degraded. The polypeptide is CCA-adding enzyme (Streptococcus agalactiae serotype III (strain NEM316)).